Reading from the N-terminus, the 478-residue chain is GTPase Obg (478 aa).

One can recognise an Obg domain in the interval 2-159 (TTFVDRVELH…RDIVLELKTV (158 aa)). Positions 61-87 (HHSPHRKATNGQPGAGDNRSGKDGQDL) are disordered. The OBG-type G domain occupies 160 to 330 (ADVALVGYPS…LSFALAGIIA (171 aa)). GTP contacts are provided by residues 166–173 (GYPSAGKS), 191–195 (FTTLV), 212–215 (DVPG), 282–285 (NKVD), and 311–313 (SAI). Residues Ser-173 and Thr-193 each coordinate Mg(2+). In terms of domain architecture, OCT spans 348–430 (PRAVDDAGFT…ENAVVFDWEP (83 aa)). Residues 436 to 478 (AEMLGRRGEDHRLEEPRPAAQRRRERDAERDDAEKEYDEFDPF) form a disordered region. Over residues 439–468 (LGRRGEDHRLEEPRPAAQRRRERDAERDDA) the composition is skewed to basic and acidic residues. The segment covering 469 to 478 (EKEYDEFDPF) has biased composition (acidic residues).

It belongs to the TRAFAC class OBG-HflX-like GTPase superfamily. OBG GTPase family. In terms of assembly, monomer. Requires Mg(2+) as cofactor.

It is found in the cytoplasm. In terms of biological role, an essential GTPase which binds GTP, GDP and possibly (p)ppGpp with moderate affinity, with high nucleotide exchange rates and a fairly low GTP hydrolysis rate. Plays a role in control of the cell cycle, stress response, ribosome biogenesis and in those bacteria that undergo differentiation, in morphogenesis control. This is GTPase Obg from Streptomyces griseus subsp. griseus (strain JCM 4626 / CBS 651.72 / NBRC 13350 / KCC S-0626 / ISP 5235).